The primary structure comprises 188 residues: Elongation factor P (188 aa).

K34 carries the N6-(3,6-diaminohexanoyl)-5-hydroxylysine modification.

Belongs to the elongation factor P family. May be beta-lysylated on the epsilon-amino group of Lys-34 by the combined action of EpmA and EpmB, and then hydroxylated on the C5 position of the same residue by EpmC (if this protein is present). Lysylation is critical for the stimulatory effect of EF-P on peptide-bond formation. The lysylation moiety may extend toward the peptidyltransferase center and stabilize the terminal 3-CCA end of the tRNA. Hydroxylation of the C5 position on Lys-34 may allow additional potential stabilizing hydrogen-bond interactions with the P-tRNA.

Its subcellular location is the cytoplasm. The protein operates within protein biosynthesis; polypeptide chain elongation. Its function is as follows. Involved in peptide bond synthesis. Alleviates ribosome stalling that occurs when 3 or more consecutive Pro residues or the sequence PPG is present in a protein, possibly by augmenting the peptidyl transferase activity of the ribosome. Modification of Lys-34 is required for alleviation. This is Elongation factor P from Erwinia tasmaniensis (strain DSM 17950 / CFBP 7177 / CIP 109463 / NCPPB 4357 / Et1/99).